Consider the following 313-residue polypeptide: Putative S-adenosyl-L-methionine-dependent methyltransferase MMAR_0955 (313 aa).

S-adenosyl-L-methionine-binding positions include Asp132 and 161–162; that span reads DL.

The protein belongs to the UPF0677 family.

Exhibits S-adenosyl-L-methionine-dependent methyltransferase activity. This chain is Putative S-adenosyl-L-methionine-dependent methyltransferase MMAR_0955, found in Mycobacterium marinum (strain ATCC BAA-535 / M).